Consider the following 103-residue polypeptide: Heme-copper oxidase subunit 4 (103 aa).

Helical transmembrane passes span 20-40 (VWIV…EGIA), 42-62 (NPFV…ALFF), and 75-95 (ITVS…TSVL).

The protein resides in the cell membrane. This chain is Heme-copper oxidase subunit 4 (aoxC), found in Aeropyrum pernix (strain ATCC 700893 / DSM 11879 / JCM 9820 / NBRC 100138 / K1).